Here is a 575-residue protein sequence, read N- to C-terminus: Sulfite reductase [NADPH] hemoprotein beta-component (575 aa).

Positions 440, 446, 485, and 489 each coordinate [4Fe-4S] cluster. C489 lines the siroheme pocket.

The protein belongs to the nitrite and sulfite reductase 4Fe-4S domain family. In terms of assembly, alpha(8)-beta(8). The alpha component is a flavoprotein, the beta component is a hemoprotein. Siroheme is required as a cofactor. It depends on [4Fe-4S] cluster as a cofactor.

It catalyses the reaction hydrogen sulfide + 3 NADP(+) + 3 H2O = sulfite + 3 NADPH + 4 H(+). The protein operates within sulfur metabolism; hydrogen sulfide biosynthesis; hydrogen sulfide from sulfite (NADPH route): step 1/1. In terms of biological role, component of the sulfite reductase complex that catalyzes the 6-electron reduction of sulfite to sulfide. This is one of several activities required for the biosynthesis of L-cysteine from sulfate. In Chromohalobacter salexigens (strain ATCC BAA-138 / DSM 3043 / CIP 106854 / NCIMB 13768 / 1H11), this protein is Sulfite reductase [NADPH] hemoprotein beta-component.